Here is a 487-residue protein sequence, read N- to C-terminus: UDP-N-acetylmuramate--L-alanine ligase (487 aa).

129 to 135 (GTHGKTT) contributes to the ATP binding site.

The protein belongs to the MurCDEF family.

The protein localises to the cytoplasm. The enzyme catalyses UDP-N-acetyl-alpha-D-muramate + L-alanine + ATP = UDP-N-acetyl-alpha-D-muramoyl-L-alanine + ADP + phosphate + H(+). Its pathway is cell wall biogenesis; peptidoglycan biosynthesis. Its function is as follows. Cell wall formation. The polypeptide is UDP-N-acetylmuramate--L-alanine ligase (Aliivibrio fischeri (strain ATCC 700601 / ES114) (Vibrio fischeri)).